Reading from the N-terminus, the 133-residue chain is Putative nickel-responsive regulator (133 aa).

Ni(2+) contacts are provided by His-74, His-85, His-87, and Cys-93.

Belongs to the transcriptional regulatory CopG/NikR family. Ni(2+) serves as cofactor.

Functionally, transcriptional regulator. The sequence is that of Putative nickel-responsive regulator from Saccharolobus solfataricus (strain ATCC 35092 / DSM 1617 / JCM 11322 / P2) (Sulfolobus solfataricus).